The primary structure comprises 328 residues: CMP-N-acetylneuraminate-beta-galactosamide-alpha-2,3-sialyltransferase 4 (328 aa).

The Cytoplasmic portion of the chain corresponds to 1–7; that stretch reads MCPAGWK. Residues 8–25 form a helical; Signal-anchor for type II membrane protein membrane-spanning segment; sequence LLAMLALVLVVMVWYSIS. Over 26 to 328 the chain is Lumenal; it reads REDSFYFPIP…MGAVKNLTSF (303 aa). Residues Asn56, Asn126, Asn305, and Asn324 are each glycosylated (N-linked (GlcNAc...) asparagine). Cys115 and Cys268 form a disulfide bridge.

The protein belongs to the glycosyltransferase 29 family. The soluble form derives from the membrane form by proteolytic processing.

It localises to the golgi apparatus. Its subcellular location is the golgi stack membrane. The protein resides in the secreted. It catalyses the reaction a beta-D-galactosyl-(1-&gt;3)-N-acetyl-beta-D-galactosaminyl derivative + CMP-N-acetyl-beta-neuraminate = an N-acetyl-alpha-neuraminyl-(2-&gt;3)-beta-D-galactosyl-(1-&gt;3)-N-acetyl-beta-D-galactosaminyl derivative + CMP + H(+). The catalysed reaction is a beta-D-galactosyl-(1-&gt;3)-N-acetyl-alpha-D-galactosaminyl derivative + CMP-N-acetyl-beta-neuraminate = an N-acetyl-alpha-neuraminyl-(2-&gt;3)-beta-D-galactosyl-(1-&gt;3)-N-acetyl-alpha-D-galactosaminyl derivative + CMP + H(+). The enzyme catalyses a beta-D-galactosyl-(1-&gt;4)-N-acetyl-beta-D-glucosaminyl derivative + CMP-N-acetyl-beta-neuraminate = an N-acetyl-alpha-neuraminyl-(2-&gt;3)-beta-D-galactosyl-(1-&gt;4)-N-acetyl-beta-D-glucosaminyl derivative + CMP + H(+). It carries out the reaction a ganglioside GM1 (d18:1(4E)) + CMP-N-acetyl-beta-neuraminate = a ganglioside GD1a (d18:1(4E)) + CMP + H(+). It catalyses the reaction a ganglioside GA1 (d18:1(4E)) + CMP-N-acetyl-beta-neuraminate = a ganglioside GM1b (d18:1(4E)) + CMP + H(+). The catalysed reaction is a ganglioside GT1c (d18:1(4E)) + CMP-N-acetyl-beta-neuraminate = a ganglioside GQ1c (d18:1(4E)) + CMP + H(+). The enzyme catalyses a neolactoside nLc4Cer + CMP-N-acetyl-beta-neuraminate = a neolactoside IV(3)-alpha-NeuAc-nLc4Cer + CMP + H(+). It carries out the reaction a neolactoside nLc4Cer(d18:1(4E)) + CMP-N-acetyl-beta-neuraminate = a neolactoside IV(3)-alpha-NeuAc-nLc4Cer(d18:1(4E)) + CMP + H(+). Its pathway is protein modification; protein glycosylation. It participates in glycolipid biosynthesis. A beta-galactoside alpha2-3 sialyltransferase involved in terminal sialylation of glycoproteins and glycolipids. Catalyzes the transfer of sialic acid (N-acetyl-neuraminic acid; Neu5Ac) from the nucleotide sugar donor CMP-Neu5Ac onto acceptor Galbeta-(1-&gt;3)-GalNAc- and Galbeta-(1-&gt;4)-GlcNAc-terminated glycoconjugates through an alpha2-3 linkage. Plays a major role in hemostasis. Responsible for sialylation of plasma VWF/von Willebrand factor, preventing its recognition by asialoglycoprotein receptors (ASGPR) and subsequent clearance. Regulates ASGPR-mediated clearance of platelets. Participates in the biosynthesis of the sialyl Lewis X epitopes, both on O- and N-glycans, which are recognized by SELE/E-selectin, SELP/P-selectin and SELL/L-selectin. Essential for selectin-mediated rolling and adhesion of leukocytes during extravasation. Contributes to adhesion and transendothelial migration of neutrophils likely through terminal sialylation of CXCR2. In glycosphingolipid biosynthesis, sialylates GM1 and GA1 gangliosides to form GD1a and GM1b, respectively. Metabolizes brain c-series ganglioside GT1c forming GQ1c. Synthesizes ganglioside LM1 (IV3Neu5Ac-nLc4Cer), a major structural component of peripheral nerve myelin. This Pan troglodytes (Chimpanzee) protein is CMP-N-acetylneuraminate-beta-galactosamide-alpha-2,3-sialyltransferase 4 (ST3GAL4).